A 63-amino-acid chain; its full sequence is Large ribosomal subunit protein uL29 (63 aa).

Belongs to the universal ribosomal protein uL29 family.

In Escherichia coli O8 (strain IAI1), this protein is Large ribosomal subunit protein uL29.